The primary structure comprises 994 residues: Sarcoplasmic/endoplasmic reticulum calcium ATPase 1 (994 aa).

Over 1–48 the chain is Cytoplasmic; the sequence is MENAHAKTAEECLAFFGVNESVGLSGEQVRRALEKYGHNELPAEEGKT. A helical transmembrane segment spans residues 49–69; the sequence is IWELVVEQFEDLLVRILLLAA. The Lumenal portion of the chain corresponds to 70–89; that stretch reads CISFVLAWFEEGEETITAFV. Residues 90–110 traverse the membrane as a helical segment; it reads EPFVILLILIANAVVGVWQER. Residues 111–253 lie on the Cytoplasmic side of the membrane; sequence NAENAIEALK…QDKTPLQQKL (143 aa). A helical membrane pass occupies residues 254 to 273; sequence DEFGEQLSKVISLICVAVWL. Topologically, residues 274–295 are lumenal; the sequence is INIGHFNDPVHGGSWIRGAIYY. Residues 296–313 form a helical membrane-spanning segment; that stretch reads FKIAVALAVAAIPEGLPA. Val304, Ala305, Ile307, and Glu309 together coordinate Ca(2+). Topologically, residues 314–757 are cytoplasmic; that stretch reads VITTCLALGT…EEGRAIYNNM (444 aa). Catalysis depends on Asp351, which acts as the 4-aspartylphosphate intermediate. Positions 351 and 353 each coordinate Mg(2+). ATP is bound by residues Thr353, Glu442, Arg489, Lys515, Arg560, Thr625, Gly626, Asp627, Arg678, and Lys684. Asp703 lines the Mg(2+) pocket. Residue Asn706 coordinates ATP. Residues 758 to 777 form a helical membrane-spanning segment; it reads KQFIRYLISSNVGEVVCIFL. Ca(2+) contacts are provided by Asn768 and Glu771. Residues 778-787 lie on the Lumenal side of the membrane; sequence TAALGLPEAL. The helical transmembrane segment at 788 to 808 threads the bilayer; the sequence is IPVQLLWVNLVTDGLPATALG. The interaction with PLN stretch occupies residues 788 to 808; it reads IPVQLLWVNLVTDGLPATALG. Residues Asn796, Thr799, and Asp800 each contribute to the Ca(2+) site. The Cytoplasmic segment spans residues 809–828; that stretch reads FNPPDLDIMDKPPRSPKEPL. Residues 829–851 form a helical membrane-spanning segment; sequence ISGWLFFRYLAIGGYVGAATVGA. The Lumenal segment spans residues 852–897; the sequence is AAWWFLYAEDGPSLTYHQLTHFMQCTHHNAEFEGVDCDIFESPVPM. Cys876 and Cys888 form a disulfide bridge. Residues 898 to 917 form a helical membrane-spanning segment; that stretch reads TMALSVLVTIEMCNALNSLS. A Ca(2+)-binding site is contributed by Glu908. The Cytoplasmic portion of the chain corresponds to 918-930; it reads ENQSLLRMPPWVN. The helical transmembrane segment at 931 to 949 threads the bilayer; sequence IWLVGSICLSMSLHFVILY. Residues 932-943 are interaction with PLN; that stretch reads WLVGSICLSMSL. The Lumenal segment spans residues 950 to 964; it reads VDPLPMIFKLTHLDL. The chain crosses the membrane as a helical span at residues 965–985; sequence AHWLVVLRISFPVILLDEALK. At 986-994 the chain is on the cytoplasmic side; it reads FVARNYLEA.

It belongs to the cation transport ATPase (P-type) (TC 3.A.3) family. Type IIA subfamily. As to quaternary structure, interacts with sarcolipin (SLN). Interacts with phospholamban (PLN). Interacts with myoregulin (MRLN). Interacts with DWORF. Requires Mg(2+) as cofactor.

The protein localises to the endoplasmic reticulum membrane. It is found in the sarcoplasmic reticulum membrane. The enzyme catalyses Ca(2+)(in) + ATP + H2O = Ca(2+)(out) + ADP + phosphate + H(+). Its activity is regulated as follows. Inhibited by sarcolipin (SLN) and myoregulin (MRLN). Also shown to be inhibited by phospholamban (PLN) in vitro. Enhanced by DWORF; DWORF increases activity by displacing sarcolipin (SLN), phospholamban (PLN) and myoregulin (MRLN). Key regulator of striated muscle performance by acting as the major Ca(2+) ATPase responsible for the reuptake of cytosolic Ca(2+) into the sarcoplasmic reticulum. Catalyzes the hydrolysis of ATP coupled with the translocation of calcium from the cytosol to the sarcoplasmic reticulum lumen. Contributes to calcium sequestration involved in muscular excitation/contraction. The sequence is that of Sarcoplasmic/endoplasmic reticulum calcium ATPase 1 (ATP2A1) from Gallus gallus (Chicken).